The sequence spans 1422 residues: DNA-directed RNA polymerase subunit beta (1422 aa).

Positions 1392-1422 (QAAREAAERDLGGGPLGAPRGAVASGEKSSA) are disordered.

The protein belongs to the RNA polymerase beta chain family. The RNAP catalytic core consists of 2 alpha, 1 beta, 1 beta' and 1 omega subunit. When a sigma factor is associated with the core the holoenzyme is formed, which can initiate transcription.

The enzyme catalyses RNA(n) + a ribonucleoside 5'-triphosphate = RNA(n+1) + diphosphate. Its function is as follows. DNA-dependent RNA polymerase catalyzes the transcription of DNA into RNA using the four ribonucleoside triphosphates as substrates. The polypeptide is DNA-directed RNA polymerase subunit beta (Anaeromyxobacter dehalogenans (strain 2CP-C)).